The sequence spans 476 residues: Serine/threonine-protein kinase Chk1 (476 aa).

The segment at 1 to 265 is interaction with CLSPN; that stretch reads MAVPFVEDWD…IPDIKKDRWY (265 aa). The 257-residue stretch at 9–265 folds into the Protein kinase domain; it reads WDLVQTLGEG…IPDIKKDRWY (257 aa). ATP-binding positions include 15 to 23 and Lys-38; that span reads LGEGAYGEV. Residue Asp-130 is the Proton acceptor of the active site. Residue Lys-132 forms a Glycyl lysine isopeptide (Lys-Gly) (interchain with G-Cter in ubiquitin) linkage. The tract at residues 267 to 331 is disordered; sequence KPLNRGAKRP…RTGLSLWDTG (65 aa). Ser-280 bears the Phosphoserine; by PKB/AKT1 mark. Over residues 280 to 291 the composition is skewed to low complexity; it reads SGGMSESSSGFS. A phosphoserine mark is found at Ser-286, Ser-296, and Ser-301. Over residues 298 to 320 the composition is skewed to polar residues; sequence LDFSPVNNGSSEETVKFSSSQPE. Ser-317 is modified (phosphoserine; by ATM and ATR). Ser-345 carries the phosphoserine; by ATR modification. The interval 391-476 is autoinhibitory region; sequence QCLKETFEKL…SSQKVWFPVT (86 aa). A Glycyl lysine isopeptide (Lys-Gly) (interchain with G-Cter in ubiquitin) cross-link involves residue Lys-436. Ser-463, Ser-467, and Ser-468 each carry phosphoserine.

Belongs to the protein kinase superfamily. CAMK Ser/Thr protein kinase family. NIM1 subfamily. In terms of assembly, interacts (phosphorylated by ATR) with RAD51. Interacts with and phosphorylates CLSPN, an adapter protein that regulates the ATR-dependent phosphorylation of CHEK1. Interacts with BRCA1. Interacts with and phosphorylates CDC25A, CDC25B and CDC25C. Interacts with FBXO6, which regulates CHEK1. Interacts with PPM1D, which regulates CHEK1 through dephosphorylation. Interacts with TIMELESS; DNA damage-dependent. Interacts with FEM1B; activates CHEK1 in response to stress. Interacts with TLK1. Interacts with XPO1 and YWHAZ. Interacts with CDK5RAP3; antagonizes CHEK1. Post-translationally, phosphorylated by ATR in a RAD17-dependent manner in response to ultraviolet irradiation and inhibition of DNA replication. Phosphorylated by ATM in response to ionizing irradiation. ATM and ATR can both phosphorylate Ser-317 and Ser-345 and this results in enhanced kinase activity. Phosphorylation at Ser-345 induces a change in the conformation of the protein, activates the kinase activity and is a prerequisite for interaction with FBXO6 and subsequent ubiquitination at Lys-436. Phosphorylation at Ser-345 also increases binding to 14-3-3 proteins and promotes nuclear retention. Conversely, dephosphorylation at Ser-345 by PPM1D may contribute to exit from checkpoint mediated cell cycle arrest. Phosphorylation at Ser-280 by AKT1/PKB, may promote mono and/or diubiquitination. Also phosphorylated at undefined residues during mitotic arrest, resulting in decreased activity. Ubiquitinated. Mono or diubiquitination promotes nuclear exclusion. The activated form (phosphorylated on Ser-345) is polyubiquitinated at Lys-436 by some SCF-type E3 ubiquitin ligase complex containing FBXO6 promoting its degradation. Ubiquitination and degradation are required to terminate the checkpoint and ensure that activated CHEK1 does not accumulate as cells progress through S phase, when replication forks encounter transient impediments during normal DNA replication. 'Lys-63'-mediated ubiquitination by TRAF4 at Lys-132 activates cell cycle arrest and activation of DNA repair. In terms of processing, proteolytically cleaved at the C-terminus by SPRTN during normal DNA replication, thereby promoting CHEK1 removal from chromatin and activating the protein kinase activity. In terms of tissue distribution, found in all adult tissues tested. Elevated expression in testis, lung and spleen. 15.5 day old embryos show ubiquitous expression with strong expression in brain, liver, kidney, pancreas, intestine, thymus and lung.

The protein resides in the nucleus. It localises to the chromosome. Its subcellular location is the cytoplasm. The protein localises to the cytoskeleton. It is found in the microtubule organizing center. The protein resides in the centrosome. It carries out the reaction L-seryl-[protein] + ATP = O-phospho-L-seryl-[protein] + ADP + H(+). The catalysed reaction is L-threonyl-[protein] + ATP = O-phospho-L-threonyl-[protein] + ADP + H(+). With respect to regulation, activated through phosphorylation predominantly by ATR but also by ATM in response to DNA damage or inhibition of DNA replication. Activation is modulated by several mediators including CLSPN, BRCA1 and FEM1B. Proteolytic cleavage at the C-terminus by SPRTN during normal DNA replication activates the protein kinase activity. Its function is as follows. Serine/threonine-protein kinase which is required for checkpoint-mediated cell cycle arrest and activation of DNA repair in response to the presence of DNA damage or unreplicated DNA. May also negatively regulate cell cycle progression during unperturbed cell cycles. This regulation is achieved by a number of mechanisms that together help to preserve the integrity of the genome. Recognizes the substrate consensus sequence [R-X-X-S/T]. Binds to and phosphorylates CDC25A, CDC25B and CDC25C. Phosphorylation of CDC25A at 'Ser-178' and 'Thr-507' and phosphorylation of CDC25C at 'Ser-216' creates binding sites for 14-3-3 proteins which inhibit CDC25A and CDC25C. Phosphorylation of CDC25A at 'Ser-76', 'Ser-124', 'Ser-178', 'Ser-279' and 'Ser-293' promotes proteolysis of CDC25A. Phosphorylation of CDC25A at 'Ser-76' primes the protein for subsequent phosphorylation at 'Ser-79', 'Ser-82' and 'Ser-88' by NEK11, which is required for polyubiquitination and degradation of CDCD25A. Inhibition of CDC25 leads to increased inhibitory tyrosine phosphorylation of CDK-cyclin complexes and blocks cell cycle progression. Also phosphorylates NEK6. Binds to and phosphorylates RAD51 at 'Thr-309', which promotes the release of RAD51 from BRCA2 and enhances the association of RAD51 with chromatin, thereby promoting DNA repair by homologous recombination. Phosphorylates multiple sites within the C-terminus of TP53, which promotes activation of TP53 by acetylation and promotes cell cycle arrest and suppression of cellular proliferation. Also promotes repair of DNA cross-links through phosphorylation of FANCE. Binds to and phosphorylates TLK1 at 'Ser-743', which prevents the TLK1-dependent phosphorylation of the chromatin assembly factor ASF1A. This may enhance chromatin assembly both in the presence or absence of DNA damage. May also play a role in replication fork maintenance through regulation of PCNA. May regulate the transcription of genes that regulate cell-cycle progression through the phosphorylation of histones. Phosphorylates histone H3.1 (to form H3T11ph), which leads to epigenetic inhibition of a subset of genes. May also phosphorylate RB1 to promote its interaction with the E2F family of transcription factors and subsequent cell cycle arrest. Phosphorylates SPRTN, promoting SPRTN recruitment to chromatin. Reduces replication stress and activates the G2/M checkpoint, by phosphorylating and inactivating PABIR1/FAM122A and promoting the serine/threonine-protein phosphatase 2A-mediated dephosphorylation and stabilization of WEE1 levels and activity. The chain is Serine/threonine-protein kinase Chk1 (Chek1) from Mus musculus (Mouse).